We begin with the raw amino-acid sequence, 122 residues long: MVSKKSRTVVREQKHRRLRNRFSGTAERPRLAVFRSNNHMYAQIIDDTVGKTLVSASTLDKEVKAELEKTNNVEAAAAVGTVVAKRALEKGIKTVVYDRGGFIYAGKIKALAEAAREAGLEF.

The protein belongs to the universal ribosomal protein uL18 family. As to quaternary structure, part of the 50S ribosomal subunit; part of the 5S rRNA/L5/L18/L25 subcomplex. Contacts the 5S and 23S rRNAs.

This is one of the proteins that bind and probably mediate the attachment of the 5S RNA into the large ribosomal subunit, where it forms part of the central protuberance. The chain is Large ribosomal subunit protein uL18 from Lachnospira eligens (strain ATCC 27750 / DSM 3376 / VPI C15-48 / C15-B4) (Eubacterium eligens).